Reading from the N-terminus, the 802-residue chain is Ras GTPase-activating protein 4 (802 aa).

C2 domains follow at residues 1 to 105 (MAKR…SGWT) and 116 to 232 (VQGE…EGWF). Asp21, Asp27, Asp74, Asp76, Ser79, Asp82, Asp149, Asp155, Asp202, Asp204, Ser207, and Asp210 together coordinate Ca(2+). The region spanning 317 to 545 (GLAKDFLDLL…AQLKDFIMKL (229 aa)) is the Ras-GAP domain. Residues 565–672 (PPVKEGPLFI…WLSALRKAST (108 aa)) form the PH domain. The segment at 674-710 (NRGLLRSYHPGIFRGDKWSCCHQKDKTDQGCDKTHSR) adopts a Btk-type zinc-finger fold. The Zn(2+) site is built by His682, Cys693, Cys694, and Cys704.

Requires Ca(2+) as cofactor. Isoform 2 is expressed in osteoblasts.

It is found in the cytoplasm. The protein resides in the cytosol. The protein localises to the cell membrane. Ca(2+)-dependent Ras GTPase-activating protein, that switches off the Ras-MAPK pathway following a stimulus that elevates intracellular calcium. Functions as an adaptor for Cdc42 and Rac1 during FcR-mediated phagocytosis. Isoform 2 activates the Ras pathway and promotes RANKL shedding by modulating the expression of MMP14. The polypeptide is Ras GTPase-activating protein 4 (Rasa4) (Mus musculus (Mouse)).